Reading from the N-terminus, the 507-residue chain is MENNEKYIITLDSGTTSCRSLIVNKKGEIIAIAQNEFSQYFPKSGWVEHDPLEIWNTQLSTMQSVKNKAQIKSSDIVALGITNQRETIVVWDKDTGLPVYNAIVWQDVRTSSFCDQMIAENKTEFFREKTGLIINPYFSATKLKWILENVPLAKEKLAKGKLLAGTIDTWLIWKLTGGKVHASDVSNASRTMLFNIHSLDWDQEILDYLKIPRSILPKVQASSEFYGFVQSSLWSNKAKGKVPITGVAGDQQSALFGQMCTEVGMVKNTYGTGCFTLVNTGQKPVNSKNRLLTTIAWKLGNEKTIYALEGSVFVAGAAIQWLRDSLRILYNAALSDFYSSLVKDNQRVYVVPAFTGLGAPYWDSYAKGAIFGLERGTKNEHIIKATLESIAYQSNDLIKAMEKDLGQKITLLKVDGGASKSDYLMNFQASISNLDVHRPANVETTALGAAYLAGLAVGFWKDIKEIQKMIKIDHQFKPSVDQKEVDVLLKGWNEAVKRVLNWQKDIE.

Residue Thr-15 participates in ADP binding. Residues Thr-15, Thr-16, and Ser-17 each contribute to the ATP site. Thr-15 is a sn-glycerol 3-phosphate binding site. Arg-19 contributes to the ADP binding site. Residues Arg-85, Glu-86, Tyr-137, and Asp-250 each contribute to the sn-glycerol 3-phosphate site. Residues Arg-85, Glu-86, Tyr-137, Asp-250, and Gln-251 each contribute to the glycerol site. ADP-binding residues include Thr-272 and Gly-316. Positions 272, 316, 320, and 417 each coordinate ATP. Residue Gly-417 coordinates ADP.

Belongs to the FGGY kinase family.

The catalysed reaction is glycerol + ATP = sn-glycerol 3-phosphate + ADP + H(+). It participates in polyol metabolism; glycerol degradation via glycerol kinase pathway; sn-glycerol 3-phosphate from glycerol: step 1/1. With respect to regulation, inhibited by fructose 1,6-bisphosphate (FBP). Functionally, key enzyme in the regulation of glycerol uptake and metabolism. Catalyzes the phosphorylation of glycerol to yield sn-glycerol 3-phosphate. This is Glycerol kinase from Mycoplasmopsis pulmonis (strain UAB CTIP) (Mycoplasma pulmonis).